A 299-amino-acid polypeptide reads, in one-letter code: Probable alpha-L-glutamate ligase (299 aa).

The 183-residue stretch at 112 to 294 (LQLLTEQGIA…IALQMIVHIE (183 aa)) folds into the ATP-grasp domain. ATP contacts are provided by residues Lys-148, 185–186 (DF), Asp-194, and 218–220 (RAN). Residues Asp-255, Glu-267, and Asn-269 each contribute to the Mg(2+) site. The Mn(2+) site is built by Asp-255, Glu-267, and Asn-269.

This sequence belongs to the RimK family. Mg(2+) is required as a cofactor. It depends on Mn(2+) as a cofactor.

In Histophilus somni (strain 129Pt) (Haemophilus somnus), this protein is Probable alpha-L-glutamate ligase.